Here is a 585-residue protein sequence, read N- to C-terminus: Arginine--tRNA ligase (585 aa).

The short motif at Pro-127–His-137 is the 'HIGH' region element.

This sequence belongs to the class-I aminoacyl-tRNA synthetase family. In terms of assembly, monomer.

The protein localises to the cytoplasm. The catalysed reaction is tRNA(Arg) + L-arginine + ATP = L-arginyl-tRNA(Arg) + AMP + diphosphate. This chain is Arginine--tRNA ligase (argS), found in Borreliella burgdorferi (strain ATCC 35210 / DSM 4680 / CIP 102532 / B31) (Borrelia burgdorferi).